The primary structure comprises 49 residues: Large ribosomal subunit protein bL33B (49 aa).

Belongs to the bacterial ribosomal protein bL33 family.

This chain is Large ribosomal subunit protein bL33B, found in Limosilactobacillus fermentum (strain NBRC 3956 / LMG 18251) (Lactobacillus fermentum).